A 122-amino-acid chain; its full sequence is Large ribosomal subunit protein uL14 (122 aa).

This sequence belongs to the universal ribosomal protein uL14 family. In terms of assembly, part of the 50S ribosomal subunit. Forms a cluster with proteins L3 and L19. In the 70S ribosome, L14 and L19 interact and together make contacts with the 16S rRNA in bridges B5 and B8.

Its function is as follows. Binds to 23S rRNA. Forms part of two intersubunit bridges in the 70S ribosome. This chain is Large ribosomal subunit protein uL14, found in Geobacillus thermodenitrificans (strain NG80-2).